The chain runs to 292 residues: Carbapenem-hydrolyzing beta-lactamase transcriptional activator (292 aa).

The HTH lysR-type domain maps to 5–62 (IPLNALRAFEASARYLNFTKAGLELHVSQAAVSQHVRTLEAILGVNLFKRLPRGLQLT). Residues 22–41 (FTKAGLELHVSQAAVSQHVR) constitute a DNA-binding region (H-T-H motif).

Belongs to the LysR transcriptional regulatory family.

Its function is as follows. This protein is a positive regulator of gene expression of carbapenem-hydrolyzing beta-lactamase (smeA). Seems to also be a repressor of its own transcription. This chain is Carbapenem-hydrolyzing beta-lactamase transcriptional activator (smeR), found in Serratia marcescens.